The following is an 802-amino-acid chain: Pyrophosphate-energized membrane proton pump 3 (802 aa).

Helical transmembrane passes span 41–61 (LNVR…FYMG), 66–86 (PIIV…VYLT), 118–138 (YGTI…IYLF), 160–180 (VAAF…GMWV), 206–226 (AGGF…AILY), and 246–266 (LPLL…FAQL). Residue K273 participates in substrate binding. Mg(2+)-binding residues include D276, D280, and D306. 5 consecutive transmembrane segments (helical) span residues 348–368 (FILF…IGIL), 386–406 (MVVL…TFGA), 421–441 (WLNF…FVWI), 468–491 (IIAG…VAII), and 511–531 (GGLF…AYVL). Positions 541 and 568 each coordinate Mg(2+). Helical transmembrane passes span 577–597 (FAIG…MDEV), 615–635 (VFIG…WACA), 686–706 (GALA…LGYY), and 716–736 (VVAA…LFLN). Mg(2+)-binding residues include D743 and D773. K776 is a substrate binding site. Residues 782-802 (SIHVLIKMLATITLVMAPIFL) traverse the membrane as a helical segment.

Belongs to the H(+)-translocating pyrophosphatase (TC 3.A.10) family. K(+)-insensitive subfamily. Monomer.

The protein resides in the golgi apparatus membrane. The enzyme catalyses diphosphate + H2O + H(+)(in) = 2 phosphate + 2 H(+)(out). The sequence is that of Pyrophosphate-energized membrane proton pump 3 (AVPL2) from Arabidopsis thaliana (Mouse-ear cress).